We begin with the raw amino-acid sequence, 285 residues long: MSIKFKKVDYIYSPETPMEKKGLDNVSFELADNSFVALIGHTGSGKSTLMQHFNALLKPSAGVINIVGYHITPETSNKNLKRLRKKVSLVFQFPEVQLFENTVLEDIEFGPKNFGATEEEAKNKALKWMKKVGISEELASKSPFELSGGQMRRVAIAGVMAIEPQILCLDEPAAGLDPKSRHDMMQLFLDYQKAGHTVILVTHNMDDVAEYANDVLVMEKGKLIKHDTPENIFADRKWLKKHNLSEPVTGIFASELNNYKFLKNPLTIDQLIDGIKNNLEGEFYE.

One can recognise an ABC transporter domain in the interval 3 to 245 (IKFKKVDYIY…RKWLKKHNLS (243 aa)). ATP is bound at residue 40–47 (GHTGSGKS).

The protein belongs to the ABC transporter superfamily. Energy-coupling factor EcfA family. As to quaternary structure, forms a stable energy-coupling factor (ECF) transporter complex composed of 2 membrane-embedded substrate-binding proteins (S component), 2 ATP-binding proteins (A component) and 2 transmembrane proteins (T component).

It localises to the cell membrane. In terms of biological role, ATP-binding (A) component of a common energy-coupling factor (ECF) ABC-transporter complex. Unlike classic ABC transporters this ECF transporter provides the energy necessary to transport a number of different substrates. This Lactobacillus acidophilus (strain ATCC 700396 / NCK56 / N2 / NCFM) protein is Energy-coupling factor transporter ATP-binding protein EcfA2.